A 403-amino-acid chain; its full sequence is RNA-binding motif, single-stranded-interacting protein 1 (403 aa).

Residues 30-56 are disordered; it reads PAHPMAPPSPSTTSSNNNSSSSSNSGW. A compositionally biased stretch (low complexity) spans 40–54; the sequence is STTSSNNNSSSSSNS. RRM domains follow at residues 62–135 and 141–226; these read TNLY…MAKQ and TNLY…FADG. Thr208 bears the Phosphothreonine mark. Positions 382 to 395 are enriched in polar residues; it reads GQQQVAVETSNDHS. The segment at 382–403 is disordered; the sequence is GQQQVAVETSNDHSPYTFPPNK.

In terms of tissue distribution, ubiquitous. Expressed in all tissues except testis.

The protein localises to the nucleus. Its function is as follows. Single-stranded DNA binding protein that interacts with the region upstream of the MYC gene. Binds specifically to the DNA sequence motif 5'-[AT]CT[AT][AT]T-3'. Probably has a role in DNA replication. The protein is RNA-binding motif, single-stranded-interacting protein 1 (Rbms1) of Mus musculus (Mouse).